The chain runs to 144 residues: Nucleoside diphosphate kinase (144 aa).

ATP-binding residues include lysine 5, phenylalanine 53, arginine 81, threonine 87, arginine 98, and asparagine 108. Catalysis depends on histidine 111, which acts as the Pros-phosphohistidine intermediate.

This sequence belongs to the NDK family. Mg(2+) serves as cofactor.

It catalyses the reaction a 2'-deoxyribonucleoside 5'-diphosphate + ATP = a 2'-deoxyribonucleoside 5'-triphosphate + ADP. The catalysed reaction is a ribonucleoside 5'-diphosphate + ATP = a ribonucleoside 5'-triphosphate + ADP. Its function is as follows. Major role in the synthesis of nucleoside triphosphates other than ATP. The ATP gamma phosphate is transferred to the NDP beta phosphate via a ping-pong mechanism, using a phosphorylated active-site intermediate. This is Nucleoside diphosphate kinase from Solanum lycopersicum (Tomato).